Consider the following 248-residue polypeptide: Carbohydrate deacetylase (248 aa).

Mg(2+)-binding residues include His59 and His121.

The protein belongs to the YdjC deacetylase family. Mg(2+) serves as cofactor.

Functionally, probably catalyzes the deacetylation of acetylated carbohydrates an important step in the degradation of oligosaccharides. The sequence is that of Carbohydrate deacetylase from Brevibacillus brevis (strain 47 / JCM 6285 / NBRC 100599).